A 525-amino-acid chain; its full sequence is Bestrophin homolog 15 (525 aa).

The next 4 helical transmembrane spans lie at leucine 36–isoleucine 56, phenylalanine 71–isoleucine 91, leucine 237–alanine 257, and isoleucine 273–tryptophan 293.

Belongs to the anion channel-forming bestrophin (TC 1.A.46) family. Calcium-sensitive chloride channel subfamily. In terms of assembly, forms oligomers.

The protein localises to the cell membrane. In terms of biological role, forms chloride channels. The protein is Bestrophin homolog 15 (best-15) of Caenorhabditis elegans.